A 355-amino-acid chain; its full sequence is Dual-specificity RNA methyltransferase RlmN (355 aa).

The Proton acceptor role is filled by Glu-86. In terms of domain architecture, Radical SAM core spans 105–338 (KEARYTVCVS…CTIRESKGLD (234 aa)). A disulfide bridge links Cys-112 with Cys-343. The [4Fe-4S] cluster site is built by Cys-119, Cys-123, and Cys-126. S-adenosyl-L-methionine contacts are provided by residues 169-170 (GE), Ser-201, 224-226 (SLH), and Asn-300. Residue Cys-343 is the S-methylcysteine intermediate of the active site.

This sequence belongs to the radical SAM superfamily. RlmN family. [4Fe-4S] cluster serves as cofactor.

The protein localises to the cytoplasm. It catalyses the reaction adenosine(2503) in 23S rRNA + 2 reduced [2Fe-2S]-[ferredoxin] + 2 S-adenosyl-L-methionine = 2-methyladenosine(2503) in 23S rRNA + 5'-deoxyadenosine + L-methionine + 2 oxidized [2Fe-2S]-[ferredoxin] + S-adenosyl-L-homocysteine. The enzyme catalyses adenosine(37) in tRNA + 2 reduced [2Fe-2S]-[ferredoxin] + 2 S-adenosyl-L-methionine = 2-methyladenosine(37) in tRNA + 5'-deoxyadenosine + L-methionine + 2 oxidized [2Fe-2S]-[ferredoxin] + S-adenosyl-L-homocysteine. Functionally, specifically methylates position 2 of adenine 2503 in 23S rRNA and position 2 of adenine 37 in tRNAs. m2A2503 modification seems to play a crucial role in the proofreading step occurring at the peptidyl transferase center and thus would serve to optimize ribosomal fidelity. The sequence is that of Dual-specificity RNA methyltransferase RlmN from Nitratiruptor sp. (strain SB155-2).